The sequence spans 215 residues: MSKIYDWFEERLEIQAIADDITSKYVPPHVNIFYCLGGITLTCFLVQVATGFAMTFYYRPTVTEAFASVQYIMTETNFGWLIRSVHRWSASMMVLMMILHVFRVYLTGGFKKPRELTWVTGVVLAVLTASFGVTGYSLPWDQIGYWAVKIVTGVPEAIPVIGSPLVELLRGSASVGQSTLTRFYSLHTFVLPLLTAVFMLMHFLMIRKQGISGPL.

Residues 32-52 (IFYCLGGITLTCFLVQVATGF) traverse the membrane as a helical segment. Position 35 (cysteine 35) interacts with heme c. Heme b-binding residues include histidine 86 and histidine 100. 3 consecutive transmembrane segments (helical) span residues 90–110 (ASMMVLMMILHVFRVYLTGGF), 116–136 (LTWVTGVVLAVLTASFGVTGY), and 186–206 (LHTFVLPLLTAVFMLMHFLMI). Heme b is bound by residues histidine 187 and histidine 202.

The protein belongs to the cytochrome b family. PetB subfamily. The 4 large subunits of the cytochrome b6-f complex are cytochrome b6, subunit IV (17 kDa polypeptide, PetD), cytochrome f and the Rieske protein, while the 4 small subunits are PetG, PetL, PetM and PetN. The complex functions as a dimer. Requires heme b as cofactor. Heme c serves as cofactor.

It localises to the plastid. It is found in the chloroplast thylakoid membrane. Component of the cytochrome b6-f complex, which mediates electron transfer between photosystem II (PSII) and photosystem I (PSI), cyclic electron flow around PSI, and state transitions. The protein is Cytochrome b6 of Morus indica (Mulberry).